Consider the following 144-residue polypeptide: Large ribosomal subunit protein uL13 (144 aa).

Belongs to the universal ribosomal protein uL13 family. Part of the 50S ribosomal subunit.

In terms of biological role, this protein is one of the early assembly proteins of the 50S ribosomal subunit, although it is not seen to bind rRNA by itself. It is important during the early stages of 50S assembly. The polypeptide is Large ribosomal subunit protein uL13 (Mycoplasmopsis pulmonis (strain UAB CTIP) (Mycoplasma pulmonis)).